Consider the following 211-residue polypeptide: Protein-L-isoaspartate O-methyltransferase (211 aa).

Residue S62 is part of the active site.

Belongs to the methyltransferase superfamily. L-isoaspartyl/D-aspartyl protein methyltransferase family.

It localises to the cytoplasm. It carries out the reaction [protein]-L-isoaspartate + S-adenosyl-L-methionine = [protein]-L-isoaspartate alpha-methyl ester + S-adenosyl-L-homocysteine. Catalyzes the methyl esterification of L-isoaspartyl residues in peptides and proteins that result from spontaneous decomposition of normal L-aspartyl and L-asparaginyl residues. It plays a role in the repair and/or degradation of damaged proteins. The polypeptide is Protein-L-isoaspartate O-methyltransferase (Shewanella baltica (strain OS223)).